The primary structure comprises 299 residues: Putative cuticle collagen 155 (299 aa).

An N-terminal signal peptide occupies residues 1–27 (MEFEQRIKAYRFVAYSAVAFSVVAVLS). Triple-helical region stretches follow at residues 103–132 (GAAG…PGHP), 151–177 (GPPG…PGQD), 181–202 (GAPG…GAPG), and 216–278 (GAPG…VGEK). Residues 107–278 (PAGTPGKPGR…SGTPGGVGEK (172 aa)) form a disordered region. Pro residues predominate over residues 129–161 (PGHPPQQPCDPITPPPCQPCPQGPPGPPGPPGP). Residues 163–172 (GDAGGNGNPG) are compositionally biased toward gly residues. Over residues 173-197 (SPGQDGQPGAPGNKGPSGPNGNPGA) the composition is skewed to low complexity. Pro residues predominate over residues 215-233 (PGAPGPQGTPGPQGPPGQP). Over residues 250 to 268 (PNGNPGQPGADGNPGAPGQ) the composition is skewed to low complexity.

The protein belongs to the cuticular collagen family. As to quaternary structure, collagen polypeptide chains are complexed within the cuticle by disulfide bonds and other types of covalent cross-links.

Functionally, nematode cuticles are composed largely of collagen-like proteins. The cuticle functions both as an exoskeleton and as a barrier to protect the worm from its environment. This chain is Putative cuticle collagen 155 (col-155), found in Caenorhabditis elegans.